Reading from the N-terminus, the 522-residue chain is Sorting nexin-1 (522 aa).

Disordered regions lie at residues 1 to 89 (MASG…QDLF) and 115 to 142 (SLPP…QEDQ). S32 and S39 each carry phosphoserine. Over residues 35–45 (EAGDSDTEGED) the composition is skewed to acidic residues. Phosphothreonine occurs at positions 41 and 48. Phosphoserine is present on residues S58 and S72. A compositionally biased stretch (polar residues) spans 60-73 (KRTTSLLPINNGSK). A compositionally biased stretch (acidic residues) spans 132–142 (EELEEEEQEDQ). Positions 143–272 (FDLTVGITDP…EFLEKEELPR (130 aa)) constitute a PX domain. A 1,2-diacyl-sn-glycero-3-phospho-(1D-myo-inositol-3-phosphate)-binding residues include R186, S188, and K214. S188 is subject to Phosphoserine. At K237 the chain carries N6-acetyllysine. R238 contacts a 1,2-diacyl-sn-glycero-3-phospho-(1D-myo-inositol-3-phosphate). Position 280 is a phosphoserine (S280). Residues 281–298 (GAGLLKMFNKATDAVSKM) are membrane-binding amphipathic helix. The BAR domain maps to 302-522 (MNESDIWFEE…AFLPEAKAIS (221 aa)).

The protein belongs to the sorting nexin family. As to quaternary structure, predominantly forms heterodimers with BAR domain-containing sorting nexins SNX5, SNX6 and SNX32; can self-associate to form homodimers. The heterodimers are proposed to self-assemble into helical arrays on the membrane to stabilize and expand local membrane curvature underlying endosomal tubule formation. Thought to be a component of the originally described retromer complex (also called SNX-BAR retromer) which is a pentamer containing the heterotrimeric retromer cargo-selective complex (CSC), also described as vacuolar protein sorting subcomplex (VPS) and a heterodimeric membrane-deforming subcomplex formed between SNX1 or SNX2 and SNX5 or SNX6 (also called SNX-BAR subcomplex); the respective CSC and SNX-BAR subcomplexes associate with low affinity. Interacts with SNX5, SNX6, SNX32, VPS26A, VPS29, VPS35, DRD5, DENND5A, KALRN, RHOG (GDP-bound form). The interaction with SNX2 is reported controversially. Interacts with DNAJC13; prevented by presence of HGS. Interacts with HGS.

It is found in the endosome membrane. The protein localises to the golgi apparatus. Its subcellular location is the trans-Golgi network membrane. The protein resides in the early endosome membrane. It localises to the cell projection. It is found in the lamellipodium. Involved in several stages of intracellular trafficking. Interacts with membranes containing phosphatidylinositol 3-phosphate (PtdIns(3P)) or phosphatidylinositol 3,5-bisphosphate (PtdIns(3,5)P2). Acts in part as component of the retromer membrane-deforming SNX-BAR subcomplex. The SNX-BAR retromer mediates retrograde transport of cargo proteins from endosomes to the trans-Golgi network (TGN) and is involved in endosome-to-plasma membrane transport for cargo protein recycling. The SNX-BAR subcomplex functions to deform the donor membrane into a tubular profile called endosome-to-TGN transport carrier (ETC). Can sense membrane curvature and has in vitro vesicle-to-membrane remodeling activity. Involved in retrograde endosome-to-TGN transport of lysosomal enzyme receptors (IGF2R, M6PR and SORT1). Plays a role in targeting ligand-activated EGFR to the lysosomes for degradation after endocytosis from the cell surface and release from the Golgi. Involvement in retromer-independent endocytic trafficking of P2RY1 and lysosomal degradation of protease-activated receptor-1/F2R. Promotes KALRN- and RHOG-dependent but retromer-independent membrane remodeling such as lamellipodium formation; the function is dependent on GEF activity of KALRN. Required for endocytosis of DRD5 upon agonist stimulation but not for basal receptor trafficking. The chain is Sorting nexin-1 (SNX1) from Macaca fascicularis (Crab-eating macaque).